The sequence spans 365 residues: ADP-ribosylhydrolase ARH3 (365 aa).

4 residues coordinate Mg(2+): glutamate 42, threonine 77, aspartate 78, and aspartate 79. Aspartate 78 is a binding site for substrate. Substrate contacts are provided by residues 147 to 153, histidine 183, leucine 236, and isoleucine 272; that span reads KGSYGNG. Positions 315, 317, and 318 each coordinate Mg(2+).

Belongs to the ADP-ribosylglycohydrolase family. In terms of assembly, monomer. It depends on Mg(2+) as a cofactor.

It localises to the nucleus. It is found in the cytoplasm. The protein localises to the chromosome. Its subcellular location is the mitochondrion matrix. The catalysed reaction is [(1''-&gt;2')-ADP-alpha-D-ribose](n) + H2O = [(1''-&gt;2')-ADP-alpha-D-ribose](n-1) + ADP-D-ribose. The enzyme catalyses 1''-O-acetyl-ADP-alpha-D-ribose + H2O = ADP-D-ribose + acetate + H(+). It carries out the reaction O-(ADP-D-ribosyl)-L-seryl-[protein] + H2O = ADP-D-ribose + L-seryl-[protein]. It catalyses the reaction alpha-NAD(+) + H2O = ADP-D-ribose + nicotinamide + H(+). With respect to regulation, the protein undergoes a dramatic conformational switch from closed to open states upon substrate-binding, which enables specific substrate recognition for the 1''-O-linkage. The glutamate flap (Glu-42) blocks substrate entrance to Mg(2+) in the unliganded closed state. In presence of substrate, Glu-42 is ejected from the active site: this closed-to-open transition significantly widens the substrate-binding channel and precisely positions the scissile 1''-O-linkage for cleavage while securing tightly 2'- and 3'-hydroxyls of ADP-ribose. In terms of biological role, ADP-ribosylhydrolase that preferentially hydrolyzes the scissile alpha-O-linkage attached to the anomeric C1'' position of ADP-ribose and acts on different substrates, such as proteins ADP-ribosylated on serine and threonine, free poly(ADP-ribose) and O-acetyl-ADP-D-ribose. Specifically acts as a serine mono-ADP-ribosylhydrolase by mediating the removal of mono-ADP-ribose attached to serine residues on proteins, thereby playing a key role in DNA damage response. Serine ADP-ribosylation of proteins constitutes the primary form of ADP-ribosylation of proteins in response to DNA damage. Does not hydrolyze ADP-ribosyl-arginine, -cysteine, -diphthamide, or -asparagine bonds. Also able to degrade protein free poly(ADP-ribose), which is synthesized in response to DNA damage: free poly(ADP-ribose) acts as a potent cell death signal and its degradation by ADPRHL2 protects cells from poly(ADP-ribose)-dependent cell death, a process named parthanatos. Also hydrolyzes free poly(ADP-ribose) in mitochondria. Specifically digests O-acetyl-ADP-D-ribose, a product of deacetylation reactions catalyzed by sirtuins. Specifically degrades 1''-O-acetyl-ADP-D-ribose isomer, rather than 2''-O-acetyl-ADP-D-ribose or 3''-O-acetyl-ADP-D-ribose isomers. The sequence is that of ADP-ribosylhydrolase ARH3 (ADPRS) from Bos taurus (Bovine).